A 148-amino-acid chain; its full sequence is MIKEELNLWAEGVEFRHLDAYYNFILSVLNFLCIKEYELSVILCNNEYIQKLNGEFRQKPEPTDVLSFNYFEGSEQINHKIQGDIVISLEYLEFSSLEFNVEMYEELQRNTIHGILHLIGYTHDTNDFQNETMLIIQERVLRETRRVF.

Zn(2+)-binding residues include His-113, His-117, and His-123.

The protein belongs to the endoribonuclease YbeY family. Requires Zn(2+) as cofactor.

Its subcellular location is the cytoplasm. Functionally, single strand-specific metallo-endoribonuclease involved in late-stage 70S ribosome quality control and in maturation of the 3' terminus of the 16S rRNA. In Borrelia recurrentis (strain A1), this protein is Endoribonuclease YbeY.